We begin with the raw amino-acid sequence, 280 residues long: Hemin import ATP-binding protein HmuV (280 aa).

The 235-residue stretch at 26 to 260 folds into the ABC transporter domain; sequence LAAAGGLRVH…GLLSEVYDQP (235 aa). 59–66 lines the ATP pocket; sequence GPNGAGKS.

Belongs to the ABC transporter superfamily. Heme (hemin) importer (TC 3.A.1.14.5) family. As to quaternary structure, the complex is composed of two ATP-binding proteins (HmuV), two transmembrane proteins (HmuU) and a solute-binding protein (HmuT).

It localises to the cell membrane. Its function is as follows. Part of the ABC transporter complex HmuTUV involved in hemin import. Responsible for energy coupling to the transport system. In Streptomyces coelicolor (strain ATCC BAA-471 / A3(2) / M145), this protein is Hemin import ATP-binding protein HmuV.